The following is a 681-amino-acid chain: Threonine--tRNA ligase (681 aa).

A TGS domain is found at K3–T97. The interval D279–P576 is catalytic. Positions 372, 423, and 553 each coordinate Zn(2+).

Belongs to the class-II aminoacyl-tRNA synthetase family. Homodimer. Zn(2+) is required as a cofactor.

Its subcellular location is the cytoplasm. The enzyme catalyses tRNA(Thr) + L-threonine + ATP = L-threonyl-tRNA(Thr) + AMP + diphosphate + H(+). Its function is as follows. Catalyzes the attachment of threonine to tRNA(Thr) in a two-step reaction: L-threonine is first activated by ATP to form Thr-AMP and then transferred to the acceptor end of tRNA(Thr). Also edits incorrectly charged L-seryl-tRNA(Thr). The chain is Threonine--tRNA ligase from Acidobacterium capsulatum (strain ATCC 51196 / DSM 11244 / BCRC 80197 / JCM 7670 / NBRC 15755 / NCIMB 13165 / 161).